Consider the following 294-residue polypeptide: MINGSIVALITPMNSDGSIDFASLERLVEFHIDQGTDAIVAVGTTGESATLPMSEHVTVVAQTVKFAAGRIPVIGGNGANATAEAIELTKSLSKVGVAGMLGVTPYYNKPTPKGLIAHYKAVAASTDIPQILYNVPGRTAVDMQPETVAELVGVSNIIGVKEATGDIARVKRLRELCGNDFKLYSGDDATAREFLLLGGNGVISVANNIVPKAFKAMCDAALAGNAELALSLDTPLRGLYSTLFCEANPIPVKWAAHRMGLIKCGHIRLPLTELSEQCHGLLIDAMTRAQIEVK.

A pyruvate-binding site is contributed by threonine 45. The Proton donor/acceptor role is filled by tyrosine 133. The active-site Schiff-base intermediate with substrate is the lysine 161. Isoleucine 203 provides a ligand contact to pyruvate.

It belongs to the DapA family. As to quaternary structure, homotetramer; dimer of dimers.

It localises to the cytoplasm. It catalyses the reaction L-aspartate 4-semialdehyde + pyruvate = (2S,4S)-4-hydroxy-2,3,4,5-tetrahydrodipicolinate + H2O + H(+). The protein operates within amino-acid biosynthesis; L-lysine biosynthesis via DAP pathway; (S)-tetrahydrodipicolinate from L-aspartate: step 3/4. Catalyzes the condensation of (S)-aspartate-beta-semialdehyde [(S)-ASA] and pyruvate to 4-hydroxy-tetrahydrodipicolinate (HTPA). This chain is 4-hydroxy-tetrahydrodipicolinate synthase, found in Shewanella sp. (strain W3-18-1).